A 232-amino-acid chain; its full sequence is Large ribosomal subunit protein uL1 (232 aa).

The protein belongs to the universal ribosomal protein uL1 family. As to quaternary structure, part of the 50S ribosomal subunit.

Binds directly to 23S rRNA. The L1 stalk is quite mobile in the ribosome, and is involved in E site tRNA release. Functionally, protein L1 is also a translational repressor protein, it controls the translation of the L11 operon by binding to its mRNA. This chain is Large ribosomal subunit protein uL1, found in Pelotomaculum thermopropionicum (strain DSM 13744 / JCM 10971 / SI).